The following is a 40-amino-acid chain: Photosystem II reaction center protein J (40 aa).

A helical membrane pass occupies residues 8 to 28; that stretch reads IPLWLIGTVTGIPVIGLIGIF.

This sequence belongs to the PsbJ family. As to quaternary structure, PSII is composed of 1 copy each of membrane proteins PsbA, PsbB, PsbC, PsbD, PsbE, PsbF, PsbH, PsbI, PsbJ, PsbK, PsbL, PsbM, PsbT, PsbX, PsbY, PsbZ, Psb30/Ycf12, at least 3 peripheral proteins of the oxygen-evolving complex and a large number of cofactors. It forms dimeric complexes.

The protein localises to the plastid. Its subcellular location is the chloroplast thylakoid membrane. Its function is as follows. One of the components of the core complex of photosystem II (PSII). PSII is a light-driven water:plastoquinone oxidoreductase that uses light energy to abstract electrons from H(2)O, generating O(2) and a proton gradient subsequently used for ATP formation. It consists of a core antenna complex that captures photons, and an electron transfer chain that converts photonic excitation into a charge separation. This Vitis vinifera (Grape) protein is Photosystem II reaction center protein J.